The following is a 354-amino-acid chain: Methionine aminotransferase BCAT4 (354 aa).

The residue at position 198 (Lys-198) is an N6-(pyridoxal phosphate)lysine.

It belongs to the class-IV pyridoxal-phosphate-dependent aminotransferase family. The cofactor is pyridoxal 5'-phosphate. In terms of tissue distribution, mostly expressed in phloem.

It is found in the cytoplasm. The enzyme catalyses a 2-oxocarboxylate + L-methionine = 4-methylsulfanyl-2-oxobutanoate + an L-alpha-amino acid. Converts 2-oxo acids to branched-chain amino acids. Shows activity with L-Leu, L-Ile and L-Val as amino donors and alpha-keto-glutarate as an amino acceptor, but no activity for D-isomers of Leu, Ile, Val, Asp, Glu or Ala. Acts on methionine and its derivatives and the corresponding 2-oxo acids. Catalyzes the initial deamination of methionine to 4-methylthio-2-oxobutyrate as well as the transamination of other typical intermediates of the methionine chain elongation pathway. This Arabidopsis thaliana (Mouse-ear cress) protein is Methionine aminotransferase BCAT4 (BCAT4).